We begin with the raw amino-acid sequence, 296 residues long: Myeloid differentiation primary response protein MyD88 (296 aa).

The Death domain maps to 54–109 (MDFEYLEIRQLETQADPTGRLLDAWQGRPGASVGRLLELLTKLGRDDVLLELGPSI). The intermediate domain stretch occupies residues 110–155 (EEDCQKYILKQQQEEAEKPLQVAAVDSSVPRTAELAGITTLDDPLG). A TIR domain is found at 159 to 293 (ERFDAFICYC…WFWTRLAKAL (135 aa)). Phosphoserine is present on S244.

Homodimer. Also forms heterodimers with TIRAP. Binds to TLR2, TLR5, IRAK1, IRAK2 and IRAK4 via their respective TIR domains. Interacts with IL18R1. Interacts with BMX, IL1RL1, IKBKE and IRF7. Interacts with LRRFIP1 and LRRFIP2; this interaction positively regulates Toll-like receptor (TLR) signaling in response to agonist. Interacts with FLII. LRRFIP1 and LRRFIP2 compete with FLII for MYD88-binding. Interacts with IRF1. Upon IL1B treatment, forms a complex with PELI1, IRAK1, IRAK4 and TRAF6; this complex recruits MAP3K7/TAK1, TAB1 and TAB2 to mediate NF-kappa-B activation. Direct binding of SMAD6 to PELI1 prevents the complex formation and hence negatively regulates IL1R-TLR signaling and eventually NF-kappa-B-mediated gene expression. May interact with PIK3AP1. Interacts (via TIR domain) with DHX9 (via H2A and OB-fold regions); this interaction is direct. Interacts with OTUD4 deubiquitinase; the interaction is direct. Interacts with TLR4. In terms of assembly, (Microbial infection) In case of infection, interacts with uropathogenic E.coli protein TcpC; suppressing Toll-like receptor (TLR)-mediated cytokine production. As to quaternary structure, (Microbial infection) In case of infection, interacts with uropathogenic E.faecalis protein TcpF; suppressing Toll-like receptor (TLR)-mediated cytokine production. (Microbial infection) In case of infection, interacts with B.melitensis protein TcpB. In terms of assembly, (Microbial infection) Interacts with human metapneumovirus protein M2-2; this interaction prevents MYD88-mediated cytokine secretion. In terms of processing, ubiquitinated; undergoes 'Lys-63'-linked polyubiquitination. OTUD4 specifically hydrolyzes 'Lys-63'-linked polyubiquitinated MYD88. Deubiquitinated by USP3 that cleaves 'Lys-63'-linked ubiquitin chains leading to inhibition of MYD88-induced NF-kappa-B signaling. (Microbial infection) Ubiquitinated by human herpesvirus 8 (KSHV) protein RTA/ORF50, leading to proteasomal degradation ans suppression of TLR4 signaling pathway. As to expression, ubiquitous.

It is found in the cytoplasm. Its subcellular location is the nucleus. In terms of biological role, adapter protein involved in the Toll-like receptor and IL-1 receptor signaling pathway in the innate immune response. Acts via IRAK1, IRAK2, IRF7 and TRAF6, leading to NF-kappa-B activation, cytokine secretion and the inflammatory response. Increases IL-8 transcription. Involved in IL-18-mediated signaling pathway. Activates IRF1 resulting in its rapid migration into the nucleus to mediate an efficient induction of IFN-beta, NOS2/INOS, and IL12A genes. Upon TLR8 activation by GU-rich single-stranded RNA (GU-rich RNA) derived from viruses such as SARS-CoV-2, SARS-CoV and HIV-1, induces IL1B release through NLRP3 inflammasome activation. MyD88-mediated signaling in intestinal epithelial cells is crucial for maintenance of gut homeostasis and controls the expression of the antimicrobial lectin REG3G in the small intestine. This Homo sapiens (Human) protein is Myeloid differentiation primary response protein MyD88.